Reading from the N-terminus, the 140-residue chain is Transmembrane protein 107 (140 aa).

A run of 2 helical transmembrane segments spans residues 7-27 (LVPS…TLFW) and 53-73 (LVAA…GFLS). Asn79 carries N-linked (GlcNAc...) asparagine glycosylation. The next 2 helical transmembrane spans lie at 83 to 103 (SLLS…FVFE) and 113 to 133 (IFTF…IAVF).

Part of the tectonic-like complex (also named B9 complex). Interacts with TMEM237, TMEM231, MKS1 and TMEM216.

It localises to the membrane. It is found in the cell projection. The protein localises to the cilium. Plays a role in cilia formation and embryonic patterning. Requires for normal Sonic hedgehog (Shh) signaling in the neural tube and acts in combination with GLI2 and GLI3 to pattern ventral and intermediate neuronal cell types. During ciliogenesis regulates the ciliary transition zone localization of some MKS complex proteins. The protein is Transmembrane protein 107 of Mus musculus (Mouse).